The following is a 507-amino-acid chain: Protein FAM221B (507 aa).

Disordered regions lie at residues 1–100, 154–310, and 486–507; these read MEAD…SAQS, LLSP…ESRP, and ETKR…HRPF. Residues 88 to 100 show a composition bias toward polar residues; sequence NLPSTPSQSSAQS. Residues 167 to 177 are compositionally biased toward acidic residues; it reads SISDVQEEPLE. A compositionally biased stretch (polar residues) spans 182 to 193; sequence ADISETEYSISD. Composition is skewed to acidic residues over residues 208–222 and 270–281; these read PESE…EEPL and SADEEEAEEEEL. Ser-270 is modified (phosphoserine).

The protein belongs to the FAM221 family.

This chain is Protein FAM221B (Fam221b), found in Rattus norvegicus (Rat).